The following is a 364-amino-acid chain: Developmentally-regulated GTP-binding protein 2 (364 aa).

Lys-21 carries the (3S)-3-hydroxylysine modification. The region spanning 63-288 (ARVALIGFPS…LLEMLWEYLA (226 aa)) is the OBG-type G domain. GTP-binding positions include 69 to 76 (GFPSVGKS), 94 to 98 (FTTLT), 115 to 118 (DLPG), 246 to 249 (NKID), and 269 to 271 (SCG). Ser-76 and Thr-96 together coordinate Mg(2+). The TGS domain occupies 288–363 (ALTCIYTKKR…EHEDVIQIVK (76 aa)).

Belongs to the TRAFAC class OBG-HflX-like GTPase superfamily. OBG GTPase family. As to quaternary structure, interacts with RWDD1; this interaction confers protection to polyubiquitination and proteolytic degradation. Interacts with JMJD7; this interaction is direct. Mg(2+) is required as a cofactor. Hydroxylated (with S stereochemistry) at C-3 of Lys-21 by JMJD7; this modification hinders trypsin-catalyzed proteolysis in vitro. Post-translationally, polyubiquitinated. As to expression, highest levels in skeletal muscle, heart and kidney. Low levels in colon, thymus, spleen, small intestine, lung and Leukocytes.

It is found in the nucleus. The protein resides in the cytoplasm. The enzyme catalyses GTP + H2O = GDP + phosphate + H(+). Catalyzes the conversion of GTP to GDP through hydrolysis of the gamma-phosphate bond in GTP. When hydroxylated at C-3 of 'Lys-21' by JMJD7, may bind to RNA and play a role in translation. The sequence is that of Developmentally-regulated GTP-binding protein 2 from Homo sapiens (Human).